The primary structure comprises 165 residues: Endoribonuclease YbeY (165 aa).

Residues His-130, His-134, and His-140 each contribute to the Zn(2+) site.

It belongs to the endoribonuclease YbeY family. It depends on Zn(2+) as a cofactor.

The protein resides in the cytoplasm. In terms of biological role, single strand-specific metallo-endoribonuclease involved in late-stage 70S ribosome quality control and in maturation of the 3' terminus of the 16S rRNA. This Streptococcus gordonii (strain Challis / ATCC 35105 / BCRC 15272 / CH1 / DL1 / V288) protein is Endoribonuclease YbeY.